The sequence spans 657 residues: Filensin (657 aa).

A head region spans residues 1 to 38 (MYRSSFLREVRKEKYERSDAYDELRGSPEFDSLAQAQG). Residues 38 to 318 (GLENLQELNE…RIIENEDSRL (281 aa)) form the IF rod domain. Residues 39-73 (LENLQELNERFASYINRARVLEQRNTILRKQLETF) are coil 1A. A linker 1 region spans residues 74 to 82 (QRMDELVGL). Residues 83 to 182 (DEAFAGQIEF…RYKKNLMEIQ (100 aa)) are coil 1B. The interval 183–199 (TYVNILQQIIQTTPRVS) is linker 12. The interval 200 to 318 (PITTGISEEK…RIIENEDSRL (119 aa)) is coil 2. Residues 319 to 657 (NSAIAGTPVT…SKKKPGDKGS (339 aa)) form a tail region. 2 disordered regions span residues 503–530 (IGGD…ICER) and 565–593 (PDVS…TDHD). The span at 519 to 530 (PSEKEKRDICER) shows a compositional bias: basic and acidic residues.

Belongs to the intermediate filament family. In terms of tissue distribution, detected in eye lens fiber cells (at protein level). Detected in embryonic eye lens.

It is found in the cell membrane. The protein resides in the cytoplasm. It localises to the cytoskeleton. The protein localises to the cell cortex. Required for the correct formation of lens intermediate filaments. This Gallus gallus (Chicken) protein is Filensin (BFSP1).